The chain runs to 195 residues: Imidazoleglycerol-phosphate dehydratase (195 aa).

The protein belongs to the imidazoleglycerol-phosphate dehydratase family.

Its subcellular location is the cytoplasm. The catalysed reaction is D-erythro-1-(imidazol-4-yl)glycerol 3-phosphate = 3-(imidazol-4-yl)-2-oxopropyl phosphate + H2O. The protein operates within amino-acid biosynthesis; L-histidine biosynthesis; L-histidine from 5-phospho-alpha-D-ribose 1-diphosphate: step 6/9. The sequence is that of Imidazoleglycerol-phosphate dehydratase from Haloarcula marismortui (strain ATCC 43049 / DSM 3752 / JCM 8966 / VKM B-1809) (Halobacterium marismortui).